The chain runs to 103 residues: MPQAVGVIQTLGFPSVLAAADAMLKGGRVTLVYYDLAERGNFVVAIRGPVSEVNLSMKMGLAAVNESVMGGEIVSHYIVPNPPENVLAVLPVEYTEKVARFRT.

The region spanning 4–91 (AVGVIQTLGF…PPENVLAVLP (88 aa)) is the BMC domain.

Belongs to the bacterial microcompartments protein family. CcmK subfamily. In terms of assembly, forms mixed heterohexamers with CcmK4, probably with 1:5 CcmK3:CcmK4 stoichiometry. Only very weak interactions with CcmK1 and CcmK2 were seen. Bulky residues in the pore region probably preclude the formation of homohexamers by this subunit.

It is found in the carboxysome. Functionally, a probably minor shell protein component of the carboxysome, a polyhedral inclusion where RuBisCO (ribulose bisphosphate carboxylase, rbcL-rbcS) is sequestered. This subunit probably does not form homohexamers. The polypeptide is Carboxysome shell protein CcmK3 (Synechocystis sp. (strain ATCC 27184 / PCC 6803 / Kazusa)).